A 730-amino-acid chain; its full sequence is MSFFLSNLTNDSRLWKVSHNSTDLMNSPETLTLSLFCLICLMTLVALVGSIFSLVSLLTMQYRTVVSMLVTSWSVDDLLSVLSVAIFMVLQWPREAPGYFQSLCTTSALLYMCQGLSSNLKATLIVFYNFYTMHRTVVSQSSSWRSGQVLGVALTVWAVSLLLASLPLCGWGVFVRTPWGCLTDCSSPYVLLLFAVYASAFGLLAVLSVPLTHQLLCSEEPPRLHANYQEISRGASTPGTPAAGGRVLCLLPEDVEIPALPGTGSSLSSDMVFAPGQPAASSAGAGKRENLWTPRGSSSFPVSLAQKRFALILALTKVILWLPMMIHMVVKHVVGFQSLPVDMLSFLLTLLASTVTPVFVLSKRWAHLPCGCIINCQPDTYSVAFDGKKSKRKGFEFNLSFQQSYGLYKMTHADYYDDDDENPISYHNPKKYECEATKEPREDNHGVFNTITVEISTTPPLDSATLTGVNKCTNTDIPEPKQAVSEEKGAFSIKTECAINYGEATSFEGPERRLSHEETQKPDLSDWEWCRSKSERTPRQRSGGGLAIPICAFQGTVSLQAPTGKTLSLSTYEVSAEGQKITPPSKKIEVYRSKSVGHEPNSEESPSTFADTNVKIHLEVLEICDNDEALDTVSIISNISQSSTKVRSPSLRYSRKENRFVSCDLGETASYSLFLPTSDPDGDINISIPDTVEAHRQNSRRQHQDRDGYQEEIQLLNKAYRKREAESKGN.

The Extracellular portion of the chain corresponds to methionine 1 to serine 34. N-linked (GlcNAc...) asparagine glycosylation is found at asparagine 7, asparagine 10, and asparagine 20. Residues leucine 35–valine 55 traverse the membrane as a helical segment. Over serine 56–methionine 68 the chain is Cytoplasmic. A helical transmembrane segment spans residues leucine 69–valine 89. Residues leucine 90–alanine 108 are Extracellular-facing. Cysteine 104 and cysteine 181 are joined by a disulfide. The helical transmembrane segment at leucine 109–tyrosine 131 threads the bilayer. Residues threonine 132 to glutamine 148 are Cytoplasmic-facing. Residues valine 149 to cysteine 169 form a helical membrane-spanning segment. The Extracellular segment spans residues glycine 170 to proline 188. Residues tyrosine 189–valine 209 traverse the membrane as a helical segment. Residues proline 210–arginine 308 lie on the Cytoplasmic side of the membrane. A helical membrane pass occupies residues phenylalanine 309–valine 329. Over valine 330 to proline 340 the chain is Extracellular. The helical transmembrane segment at valine 341–leucine 361 threads the bilayer. Residues serine 362–asparagine 730 are Cytoplasmic-facing.

Belongs to the G-protein coupled receptor 1 family. As to expression, expressed exclusively in brain and testis.

Its subcellular location is the cell membrane. Its function is as follows. Orphan receptor. The protein is Probable G-protein coupled receptor 149 (Gpr149) of Rattus norvegicus (Rat).